We begin with the raw amino-acid sequence, 362 residues long: Manganese peroxidase 3 (362 aa).

The N-terminal stretch at Met-1 to Ala-18 is a signal peptide. The propeptide occupies Ala-19–Arg-23. Cystine bridges form between Cys-26–Cys-39, Cys-38–Cys-309, Cys-58–Cys-144, and Cys-273–Cys-338. 2 residues coordinate Mn(2+): Glu-60 and Glu-64. The active-site Proton acceptor is the His-71. 4 residues coordinate Ca(2+): Asp-72, Gly-90, Asp-92, and Ser-94. Asn-126 carries an N-linked (GlcNAc...) asparagine glycan. His-200 serves as a coordination point for heme b. A Ca(2+)-binding site is contributed by Thr-201. A Mn(2+)-binding site is contributed by Asp-206. Asp-218, Thr-220, Ile-223, and Asp-225 together coordinate Ca(2+). The segment at Thr-341–Ser-362 is disordered.

Belongs to the peroxidase family. Ligninase subfamily. The cofactor is heme b. Ca(2+) serves as cofactor.

It localises to the secreted. The catalysed reaction is 2 Mn(2+) + H2O2 + 2 H(+) = 2 Mn(3+) + 2 H2O. Its function is as follows. Catalyzes the oxidation of Mn(2+) to Mn(3+). The latter, acting as a diffusible redox mediator, is capable of oxidizing a variety of lignin compounds. This isozyme is also able to oxidize phenols and amines in the absence of Mn(2+), similar to versatile peroxidases. In Phlebia radiata (White-rot fungus), this protein is Manganese peroxidase 3 (mnp3).